Reading from the N-terminus, the 171-residue chain is Transcription factor E (171 aa).

Positions 5–88 constitute an HTH TFE/IIEalpha-type domain; sequence YEDPFIRIAV…RWRSRREEVE (84 aa).

Belongs to the TFE family. As to quaternary structure, monomer. Interaction with RNA polymerase subunits RpoF and RpoE is necessary for Tfe stimulatory transcription activity. Able to interact with Tbp and RNA polymerase in the absence of DNA promoter. Interacts both with the preinitiation and elongation complexes.

In terms of biological role, transcription factor that plays a role in the activation of archaeal genes transcribed by RNA polymerase. Facilitates transcription initiation by enhancing TATA-box recognition by TATA-box-binding protein (Tbp), and transcription factor B (Tfb) and RNA polymerase recruitment. Not absolutely required for transcription in vitro, but particularly important in cases where Tbp or Tfb function is not optimal. It dynamically alters the nucleic acid-binding properties of RNA polymerases by stabilizing the initiation complex and destabilizing elongation complexes. Seems to translocate with the RNA polymerase following initiation and acts by binding to the non template strand of the transcription bubble in elongation complexes. The sequence is that of Transcription factor E from Cenarchaeum symbiosum (strain A).